Consider the following 600-residue polypeptide: Oligopeptide-binding protein OppA (600 aa).

An N-terminal signal peptide occupies residues 1–22 (MKKLKVTLLASSVVLAAALLSA). A lipid anchor (N-palmitoyl cysteine) is attached at Cys23. Cys23 carries S-diacylglycerol cysteine lipidation.

The protein belongs to the bacterial solute-binding protein 5 family. In terms of assembly, the complex is composed of two ATP-binding proteins (OppD and OppF), two transmembrane proteins (OppB and OppC) and a solute-binding protein (OppA).

It localises to the cell membrane. Functionally, part of the ABC transporter complex OppABCDF involved in the uptake of oligopeptides. This chain is Oligopeptide-binding protein OppA (oppA), found in Lactococcus lactis subsp. lactis (strain IL1403) (Streptococcus lactis).